Reading from the N-terminus, the 149-residue chain is 3-hydroxyacyl-[acyl-carrier-protein] dehydratase FabZ (149 aa).

Histidine 53 is an active-site residue.

Belongs to the thioester dehydratase family. FabZ subfamily.

The protein resides in the cytoplasm. The enzyme catalyses a (3R)-hydroxyacyl-[ACP] = a (2E)-enoyl-[ACP] + H2O. Involved in unsaturated fatty acids biosynthesis. Catalyzes the dehydration of short chain beta-hydroxyacyl-ACPs and long chain saturated and unsaturated beta-hydroxyacyl-ACPs. The chain is 3-hydroxyacyl-[acyl-carrier-protein] dehydratase FabZ from Neisseria gonorrhoeae (strain ATCC 700825 / FA 1090).